A 454-amino-acid chain; its full sequence is Allantoinase (454 aa).

Zn(2+)-binding residues include His-59, His-61, Lys-150, His-190, His-246, and Asp-319. Lys-150 is subject to N6-carboxylysine.

Belongs to the metallo-dependent hydrolases superfamily. Allantoinase family. As to quaternary structure, homotetramer. It depends on Zn(2+) as a cofactor. Carboxylation allows a single lysine to coordinate two zinc ions.

It catalyses the reaction (S)-allantoin + H2O = allantoate + H(+). Its pathway is nitrogen metabolism; (S)-allantoin degradation; allantoate from (S)-allantoin: step 1/1. Catalyzes the conversion of allantoin (5-ureidohydantoin) to allantoic acid by hydrolytic cleavage of the five-member hydantoin ring. The polypeptide is Allantoinase (Bacillus licheniformis (strain ATCC 14580 / DSM 13 / JCM 2505 / CCUG 7422 / NBRC 12200 / NCIMB 9375 / NCTC 10341 / NRRL NRS-1264 / Gibson 46)).